We begin with the raw amino-acid sequence, 308 residues long: 4-hydroxy-tetrahydrodipicolinate synthase (308 aa).

Pyruvate is bound at residue threonine 53. Residue tyrosine 141 is the Proton donor/acceptor of the active site. Catalysis depends on lysine 169, which acts as the Schiff-base intermediate with substrate. Valine 209 is a binding site for pyruvate.

Belongs to the DapA family. In terms of assembly, homotetramer; dimer of dimers.

It is found in the cytoplasm. It catalyses the reaction L-aspartate 4-semialdehyde + pyruvate = (2S,4S)-4-hydroxy-2,3,4,5-tetrahydrodipicolinate + H2O + H(+). Its pathway is amino-acid biosynthesis; L-lysine biosynthesis via DAP pathway; (S)-tetrahydrodipicolinate from L-aspartate: step 3/4. Its function is as follows. Catalyzes the condensation of (S)-aspartate-beta-semialdehyde [(S)-ASA] and pyruvate to 4-hydroxy-tetrahydrodipicolinate (HTPA). The chain is 4-hydroxy-tetrahydrodipicolinate synthase from Acidothermus cellulolyticus (strain ATCC 43068 / DSM 8971 / 11B).